The sequence spans 288 residues: Phenazine biosynthesis-like domain-containing protein (288 aa).

Glu-46 is a catalytic residue.

Belongs to the PhzF family. In terms of assembly, interacts with UNRIP/MAWD.

The chain is Phenazine biosynthesis-like domain-containing protein (Pbld) from Rattus norvegicus (Rat).